Here is a 188-residue protein sequence, read N- to C-terminus: Peptide deformylase (188 aa).

Positions 94 and 136 each coordinate Fe cation. The active site involves Glu-137. His-140 contacts Fe cation.

It belongs to the polypeptide deformylase family. The cofactor is Fe(2+).

The catalysed reaction is N-terminal N-formyl-L-methionyl-[peptide] + H2O = N-terminal L-methionyl-[peptide] + formate. Functionally, removes the formyl group from the N-terminal Met of newly synthesized proteins. Requires at least a dipeptide for an efficient rate of reaction. N-terminal L-methionine is a prerequisite for activity but the enzyme has broad specificity at other positions. This Pelodictyon phaeoclathratiforme (strain DSM 5477 / BU-1) protein is Peptide deformylase.